A 670-amino-acid polypeptide reads, in one-letter code: Solute carrier organic anion transporter family member 1A2 (670 aa).

Over 1-20 (MGETEKRIETHRIRCLSKLK) the chain is Cytoplasmic. Residues 21–40 (MFLLAITCAFVSKTLSGSYM) form a helical membrane-spanning segment. Residues 41-59 (NSMLTQIERQFNIPTSLVG) lie on the Extracellular side of the membrane. A helical membrane pass occupies residues 60–80 (FINGSFEIGNLLLIIFVSYFG). Topologically, residues 81–86 (TKLHRP) are cytoplasmic. A helical transmembrane segment spans residues 87 to 111 (IMIGIGCVVMGLGCFLKSLPHFLMN). Residues 112–155 (QYEYESTVSVSGNLSSNSFLCMENGTQILRPTQDPSECTKEVKS) lie on the Extracellular side of the membrane. N-linked (GlcNAc...) asparagine glycosylation is found at asparagine 124 and asparagine 135. Residues 156-184 (LMWVYVLVGNIVRGMGETPILPLGISYIE) traverse the membrane as a helical segment. The Cytoplasmic portion of the chain corresponds to 185–203 (DFAKFENSPLYIGLVETGA). A helical membrane pass occupies residues 204–224 (IIGPLIGLLLASFCANVYVDT). The Extracellular segment spans residues 225 to 242 (GFVNTDDLIITPTDTRWV). Residues 243–267 (GAWWFGFLICAGVNVLTAIPFFFLP) traverse the membrane as a helical segment. Over 268-311 (NTLPKEGLETNADIIKNENEDKQKEEVKKEKYGITKDFLPFMKS) the chain is Cytoplasmic. Residues 312–333 (LSCNPIYMLFILVSVIQFNAFV) traverse the membrane as a helical segment. The Extracellular segment spans residues 334–353 (NMISFMPKYLEQQYGISSSD). Residues 354–377 (AIFLMGIYNLPPICIGYIIGGLIM) traverse the membrane as a helical segment. The Cytoplasmic segment spans residues 378 to 381 (KKFK). A helical transmembrane segment spans residues 382-405 (ITVKQAAHIGCWLSLLEYLLYFLS). Residues 406 to 513 (FLMTCENSSV…PDCSLMLQYF (108 aa)) lie on the Extracellular side of the membrane. N-linked (GlcNAc...) asparagine glycosylation is found at asparagine 412 and asparagine 419. A Kazal-like domain is found at 433–488 (NDIFADCNVDCNCPSKIWDPVCGNNGLSYLSACLAGCETSIGTGINMVFQNCSCIQ). 3 cysteine pairs are disulfide-bonded: cysteine 439/cysteine 469, cysteine 445/cysteine 465, and cysteine 454/cysteine 486. The chain crosses the membrane as a helical span at residues 514–536 (LILSAMSSFIYSLAAIPGYMVLL). Residues 537–545 (RCMKSEEKS) are Cytoplasmic-facing. The chain crosses the membrane as a helical span at residues 546 to 571 (LGVGLHTFCTRVFAGIPAPIYFGALM). The Extracellular portion of the chain corresponds to 572 to 605 (DSTCLHWGTLKCGESGACRIYDSTTFRYIYLGLP). The helical transmembrane segment at 606–623 (AALRGSSFVPALIILILL) threads the bilayer. The Cytoplasmic segment spans residues 624-670 (RKCHLPGENASSGTELIETKVKGKENECKDIYQKSTVLKDDELKTKL).

The protein belongs to the organo anion transporter (TC 2.A.60) family. Higher expression in the brain than in liver and kidney. Expressed in brain neurons in both cortex and hippocampus. Expressed in placental trophoblasts. Also expressed in lung and testes at lower levels. Expressed in the eye (at protein level). Expressed in the retina in the outer and inner nuclear layers, the inner plexiform layer and the ganglion cell layer. Expressed in liver and prostate. In testis, primarily localized to the basal membrane of Sertoli cells and weakly expressed in Leydig cells and within the tubules. Expressed in fetal brain and liver.

The protein localises to the cell membrane. It localises to the basal cell membrane. It catalyses the reaction taurocholate(out) = taurocholate(in). The enzyme catalyses glycocholate(out) = glycocholate(in). It carries out the reaction taurochenodeoxycholate(out) = taurochenodeoxycholate(in). The catalysed reaction is tauroursodeoxycholate(out) = tauroursodeoxycholate(in). It catalyses the reaction dehydroepiandrosterone 3-sulfate(out) = dehydroepiandrosterone 3-sulfate(in). The enzyme catalyses estrone 3-sulfate(out) = estrone 3-sulfate(in). It carries out the reaction 3,3',5'-triiodo-L-thyronine(out) = 3,3',5'-triiodo-L-thyronine(in). The catalysed reaction is L-thyroxine(out) = L-thyroxine(in). It catalyses the reaction taurodeoxycholate(out) = taurodeoxycholate(in). The enzyme catalyses glycodeoxycholate(out) = glycodeoxycholate(in). It carries out the reaction glycochenodeoxycholate(out) = glycochenodeoxycholate(in). The catalysed reaction is glycoursodeoxycholate(out) = glycoursodeoxycholate(in). It catalyses the reaction 17beta-estradiol 17-O-(beta-D-glucuronate)(out) = 17beta-estradiol 17-O-(beta-D-glucuronate)(in). The enzyme catalyses prostaglandin E2(out) = prostaglandin E2(in). It carries out the reaction substance P(out) = substance P(in). Transport activity is inhibited by the grapefruit juice component naringin. Its function is as follows. Na(+)-independent transporter that mediates the cellular uptake of a broad range of organic anions such as the endogenous bile salts cholate and deoxycholate, either in their unconjugated or conjugated forms (taurocholate and glycocholate), at the plasmam membrane. Responsible for intestinal absorption of bile acids. Transports dehydroepiandrosterone 3-sulfate (DHEAS), a major circulating steroid secreted by the adrenal cortex, as well as estrone 3-sulfate and 17beta-estradiol 17-O-(beta-D-glucuronate). Mediates apical uptake of all-trans-retinol (atROL) across human retinal pigment epithelium, which is essential to maintaining the integrity of the visual cycle and thus vision. Involved in the uptake of clinically used drugs. Capable of thyroid hormone transport (both T3 or 3,3',5'-triiodo-L-thyronine, and T4 or L-tyroxine). Also transports prostaglandin E2. Plays roles in blood-brain and -cerebrospinal fluid barrier transport of organic anions and signal mediators, and in hormone uptake by neural cells. May also play a role in the reuptake of neuropeptides such as substance P/TAC1 and vasoactive intestinal peptide/VIP released from retinal neurons. May play an important role in plasma and tissue distribution of the structurally diverse chemotherapeutic drugs methotrexate and paclitaxel. Shows a pH-sensitive substrate specificity which may be ascribed to the protonation state of the binding site and leads to a stimulation of substrate transport in an acidic microenvironment. Hydrogencarbonate/HCO3(-) acts as the probable counteranion that exchanges for organic anions. May contribute to regulate the transport of organic compounds in testis across the blood-testis-barrier. This is Solute carrier organic anion transporter family member 1A2 (SLCO1A2) from Homo sapiens (Human).